Consider the following 358-residue polypeptide: NADH-quinone oxidoreductase subunit H (358 aa).

The next 8 helical transmembrane spans lie at 20-40 (ITVG…IPLI), 95-115 (ALFY…WAVI), 128-148 (IGLL…IIAG), 168-188 (ISYE…SGSM), 206-226 (VFSW…ISAV), 253-273 (GFAF…ISAL), 290-310 (WGFI…AVLY), and 334-354 (VLIP…ISPL).

This sequence belongs to the complex I subunit 1 family. NDH-1 is composed of 14 different subunits. Subunits NuoA, H, J, K, L, M, N constitute the membrane sector of the complex.

Its subcellular location is the cell inner membrane. The catalysed reaction is a quinone + NADH + 5 H(+)(in) = a quinol + NAD(+) + 4 H(+)(out). Functionally, NDH-1 shuttles electrons from NADH, via FMN and iron-sulfur (Fe-S) centers, to quinones in the respiratory chain. The immediate electron acceptor for the enzyme in this species is believed to be ubiquinone. Couples the redox reaction to proton translocation (for every two electrons transferred, four hydrogen ions are translocated across the cytoplasmic membrane), and thus conserves the redox energy in a proton gradient. This subunit may bind ubiquinone. The polypeptide is NADH-quinone oxidoreductase subunit H (Neisseria meningitidis serogroup C (strain 053442)).